The sequence spans 335 residues: Putative D-threonate 4-phosphate dehydrogenase (335 aa).

His-140 and Thr-141 together coordinate substrate. A divalent metal cation is bound by residues His-170, His-214, and His-269. Residues Lys-277 and Arg-295 each contribute to the substrate site.

It belongs to the PdxA family. PdxA2 subfamily. As to quaternary structure, homodimer. A divalent metal cation serves as cofactor.

The catalysed reaction is 4-O-phospho-D-threonate + NAD(+) = dihydroxyacetone phosphate + CO2 + NADH. Functionally, catalyzes the NAD-dependent oxidation and subsequent decarboxylation of D-threonate 4-phosphate to produce dihydroxyacetone phosphate (DHAP). This chain is Putative D-threonate 4-phosphate dehydrogenase, found in Symbiobacterium thermophilum (strain DSM 24528 / JCM 14929 / IAM 14863 / T).